A 979-amino-acid chain; its full sequence is Oncostatin-M-specific receptor subunit beta (979 aa).

A signal peptide spans 1 to 27 (MALFAVFQTTFFLTLLSLRTYQSEVLA). Residues 28-740 (ERLPLTPVSL…VTTPDEHSSM (713 aa)) lie on the Extracellular side of the membrane. Asn-163 carries N-linked (GlcNAc...) asparagine glycosylation. A disulfide bridge links Cys-245 with Cys-255. N-linked (GlcNAc...) asparagine glycans are attached at residues Asn-326 and Asn-380. Fibronectin type-III domains lie at 335 to 428 (NPFS…TLEA), 433 to 528 (APDV…DPEN), 529 to 623 (KEVE…SQEL), and 625 to 736 (PSDN…TPDE). Residues 415 to 419 (WSEWS) carry the WSXWS motif motif. N-linked (GlcNAc...) asparagine glycosylation is found at Asn-446 and Asn-580. Residues 741-761 (LIHILLPMVFCVLLIMVMCYL) traverse the membrane as a helical segment. Residues 762-979 (KSQWIKETCY…TLLDPGEHYC (218 aa)) are Cytoplasmic-facing. The Box 1 motif motif lies at 770–778 (CYPDIPDPY). Ser-826 and Ser-889 each carry phosphoserine.

It belongs to the type I cytokine receptor family. Type 2 subfamily. As to quaternary structure, heterodimer composed of OSMR and IL6ST (type II OSM receptor). Heterodimer with IL31RA to form the IL31 receptor. Expressed in keratinocytes (at protein level). Expressed at relatively high levels in all neural cells as well as fibroblast and epithelial cells.

The protein resides in the membrane. Functionally, associates with IL31RA to form the IL31 receptor. Binds IL31 to activate STAT3 and possibly STAT1 and STAT5. Capable of transducing OSM-specific signaling events. The chain is Oncostatin-M-specific receptor subunit beta (OSMR) from Homo sapiens (Human).